We begin with the raw amino-acid sequence, 353 residues long: Uroporphyrinogen decarboxylase (353 aa).

Residues 29–33, Asp-79, Tyr-156, Thr-211, and His-329 contribute to the substrate site; that span reads RQAGR.

The protein belongs to the uroporphyrinogen decarboxylase family. As to quaternary structure, homodimer.

The protein localises to the cytoplasm. The catalysed reaction is uroporphyrinogen III + 4 H(+) = coproporphyrinogen III + 4 CO2. Its pathway is porphyrin-containing compound metabolism; protoporphyrin-IX biosynthesis; coproporphyrinogen-III from 5-aminolevulinate: step 4/4. Catalyzes the decarboxylation of four acetate groups of uroporphyrinogen-III to yield coproporphyrinogen-III. This chain is Uroporphyrinogen decarboxylase, found in Alcanivorax borkumensis (strain ATCC 700651 / DSM 11573 / NCIMB 13689 / SK2).